The chain runs to 85 residues: RNA-binding protein Hfq (85 aa).

A Sm domain is found at 9 to 69 (DQLLNTARKD…ISTIIPAKII (61 aa)).

The protein belongs to the Hfq family. In terms of assembly, homohexamer.

RNA chaperone that binds small regulatory RNA (sRNAs) and mRNAs to facilitate mRNA translational regulation in response to envelope stress, environmental stress and changes in metabolite concentrations. Also binds with high specificity to tRNAs. In Leptospira interrogans serogroup Icterohaemorrhagiae serovar copenhageni (strain Fiocruz L1-130), this protein is RNA-binding protein Hfq.